The chain runs to 311 residues: Cytosolic Fe-S cluster assembly factor Nubp1 homolog (311 aa).

The tract at residues 1 to 21 (MQAPPPEHCPGVESEEAGKGS) is disordered. [4Fe-4S] cluster-binding residues include cysteine 9, cysteine 23, cysteine 26, and cysteine 32. 63 to 70 (GKGGVGKS) contacts ATP. Cysteine 240 and cysteine 243 together coordinate [4Fe-4S] cluster.

It belongs to the Mrp/NBP35 ATP-binding proteins family. NUBP1/NBP35 subfamily. Heterotetramer of 2 Nubp1 and 2 Nubp2 chains. The cofactor is [4Fe-4S] cluster.

Its subcellular location is the cytoplasm. Functionally, component of the cytosolic iron-sulfur (Fe/S) protein assembly (CIA) machinery. Required for maturation of extramitochondrial Fe-S proteins. The Nubp1-Nubp2 heterotetramer forms a Fe-S scaffold complex, mediating the de novo assembly of an Fe-S cluster and its transfer to target apoproteins. In Drosophila melanogaster (Fruit fly), this protein is Cytosolic Fe-S cluster assembly factor Nubp1 homolog.